Reading from the N-terminus, the 159-residue chain is Putative ribosomal RNA large subunit methyltransferase H (159 aa).

S-adenosyl-L-methionine contacts are provided by residues L76, G108, and 127–132 (FSKMTF).

This sequence belongs to the RNA methyltransferase RlmH family.

It is found in the cytoplasm. The enzyme catalyses pseudouridine(1915) in 23S rRNA + S-adenosyl-L-methionine = N(3)-methylpseudouridine(1915) in 23S rRNA + S-adenosyl-L-homocysteine + H(+). In terms of biological role, specifically methylates the pseudouridine at position 1915 (m3Psi1915) in 23S rRNA. This chain is Putative ribosomal RNA large subunit methyltransferase H, found in Methanococcus vannielii (strain ATCC 35089 / DSM 1224 / JCM 13029 / OCM 148 / SB).